Consider the following 157-residue polypeptide: Ribosome maturation factor RimP (157 aa).

It belongs to the RimP family.

The protein resides in the cytoplasm. Functionally, required for maturation of 30S ribosomal subunits. This chain is Ribosome maturation factor RimP, found in Helicobacter hepaticus (strain ATCC 51449 / 3B1).